Consider the following 641-residue polypeptide: Threonine--tRNA ligase (641 aa).

The 61-residue stretch at 1–61 (MIKISFFDNQ…KKNGNLEILT (61 aa)) folds into the TGS domain. The segment at 240–538 (DHKKINKELD…LVEETKGVFP (299 aa)) is catalytic. Positions 334, 385, and 515 each coordinate Zn(2+).

This sequence belongs to the class-II aminoacyl-tRNA synthetase family. Homodimer. Zn(2+) is required as a cofactor.

The protein localises to the cytoplasm. It carries out the reaction tRNA(Thr) + L-threonine + ATP = L-threonyl-tRNA(Thr) + AMP + diphosphate + H(+). Its function is as follows. Catalyzes the attachment of threonine to tRNA(Thr) in a two-step reaction: L-threonine is first activated by ATP to form Thr-AMP and then transferred to the acceptor end of tRNA(Thr). Also edits incorrectly charged L-seryl-tRNA(Thr). In Aster yellows witches'-broom phytoplasma (strain AYWB), this protein is Threonine--tRNA ligase.